Here is a 251-residue protein sequence, read N- to C-terminus: Imidazole glycerol phosphate synthase subunit HisF (251 aa).

Active-site residues include Asp-11 and Asp-130.

This sequence belongs to the HisA/HisF family. In terms of assembly, heterodimer of HisH and HisF.

Its subcellular location is the cytoplasm. The enzyme catalyses 5-[(5-phospho-1-deoxy-D-ribulos-1-ylimino)methylamino]-1-(5-phospho-beta-D-ribosyl)imidazole-4-carboxamide + L-glutamine = D-erythro-1-(imidazol-4-yl)glycerol 3-phosphate + 5-amino-1-(5-phospho-beta-D-ribosyl)imidazole-4-carboxamide + L-glutamate + H(+). It participates in amino-acid biosynthesis; L-histidine biosynthesis; L-histidine from 5-phospho-alpha-D-ribose 1-diphosphate: step 5/9. In terms of biological role, IGPS catalyzes the conversion of PRFAR and glutamine to IGP, AICAR and glutamate. The HisF subunit catalyzes the cyclization activity that produces IGP and AICAR from PRFAR using the ammonia provided by the HisH subunit. The sequence is that of Imidazole glycerol phosphate synthase subunit HisF from Chlorobaculum tepidum (strain ATCC 49652 / DSM 12025 / NBRC 103806 / TLS) (Chlorobium tepidum).